A 401-amino-acid polypeptide reads, in one-letter code: Argininosuccinate synthase (401 aa).

8-16 (AYSGGLDTS) contacts ATP. Tyr86 and Ser91 together coordinate L-citrulline. Gly116 serves as a coordination point for ATP. Residues Thr118, Asn122, and Asp123 each contribute to the L-aspartate site. Asn122 lines the L-citrulline pocket. Positions 126, 175, 184, 260, and 272 each coordinate L-citrulline.

This sequence belongs to the argininosuccinate synthase family. Type 1 subfamily. Homotetramer.

Its subcellular location is the cytoplasm. It catalyses the reaction L-citrulline + L-aspartate + ATP = 2-(N(omega)-L-arginino)succinate + AMP + diphosphate + H(+). It participates in amino-acid biosynthesis; L-arginine biosynthesis; L-arginine from L-ornithine and carbamoyl phosphate: step 2/3. This Clostridium kluyveri (strain ATCC 8527 / DSM 555 / NBRC 12016 / NCIMB 10680 / K1) protein is Argininosuccinate synthase.